We begin with the raw amino-acid sequence, 130 residues long: Small ribosomal subunit protein uS9 (130 aa).

The protein belongs to the universal ribosomal protein uS9 family.

The polypeptide is Small ribosomal subunit protein uS9 (Hamiltonella defensa subsp. Acyrthosiphon pisum (strain 5AT)).